Consider the following 164-residue polypeptide: Ubiquitin-fold modifier-conjugating enzyme 1 (164 aa).

Cys-116 functions as the Glycyl thioester intermediate in the catalytic mechanism.

The protein belongs to the ubiquitin-conjugating enzyme family. UFC1 subfamily.

E2-like enzyme which forms an intermediate with UFM1 via a thioester linkage. This is Ubiquitin-fold modifier-conjugating enzyme 1 from Drosophila sechellia (Fruit fly).